Reading from the N-terminus, the 576-residue chain is TOX high mobility group box family member 3 (576 aa).

3 disordered regions span residues 189 to 258 (NLGG…PQKP), 422 to 443 (TMVG…QHQM), and 519 to 563 (LQHM…QIQS). Low complexity predominate over residues 204–215 (ASKSATPSPSSS). Over residues 223 to 239 (EANRAIGEKRAAPDSGK) the composition is skewed to basic and acidic residues. Residues 240-250 (KPKTPKKKKKK) are compositionally biased toward basic residues. Residues 255–323 (PQKPVSAYAL…EYLKALAAYR (69 aa)) constitute a DNA-binding region (HMG box). Low complexity predominate over residues 428–443 (PSTQVSPSVQTQQHQM). The segment covering 528–542 (PSPRQHSPVASQITS) has biased composition (polar residues). The span at 549 to 563 (SPQPASQQHQSQIQS) shows a compositional bias: low complexity.

Homodimer. Interacts with CREB1; the interaction is not depolarization dependent. Interacts with CREBBP (via C-terminus). Interacts (via HGM box) with CITED1 (via C-terminus); the interaction increases estrogen-response element (ERE)-dependent transcription and protection against cell death. Interacts with CREB1 (phosphorylated form). In terms of tissue distribution, expressed mainly in epithelial cells. Expressed in the central nervous system (CNS), in the ileum and within the brain in the frontal and occipital lobe.

The protein localises to the nucleus. In terms of biological role, transcriptional coactivator of the p300/CBP-mediated transcription complex. Activates transactivation through cAMP response element (CRE) sites. Protects against cell death by inducing antiapoptotic and repressing pro-apoptotic transcripts. Stimulates transcription from the estrogen-responsive or BCL-2 promoters. Required for depolarization-induced transcription activation of the C-FOS promoter in neurons. Associates with chromatin to the estrogen-responsive C3 promoter region. This chain is TOX high mobility group box family member 3 (TOX3), found in Homo sapiens (Human).